The following is a 338-amino-acid chain: Anthranilate phosphoribosyltransferase (338 aa).

Residues Gly-81, 84-85 (GD), Ser-89, 91-94 (NVST), 109-117 (KHGNRALSS), and Ala-121 each bind 5-phospho-alpha-D-ribose 1-diphosphate. Position 81 (Gly-81) interacts with anthranilate. Ser-93 provides a ligand contact to Mg(2+). Asn-112 contacts anthranilate. Residue Arg-167 coordinates anthranilate. Mg(2+) is bound by residues Asp-226 and Glu-227.

The protein belongs to the anthranilate phosphoribosyltransferase family. As to quaternary structure, homodimer. The cofactor is Mg(2+).

The catalysed reaction is N-(5-phospho-beta-D-ribosyl)anthranilate + diphosphate = 5-phospho-alpha-D-ribose 1-diphosphate + anthranilate. It participates in amino-acid biosynthesis; L-tryptophan biosynthesis; L-tryptophan from chorismate: step 2/5. Its function is as follows. Catalyzes the transfer of the phosphoribosyl group of 5-phosphorylribose-1-pyrophosphate (PRPP) to anthranilate to yield N-(5'-phosphoribosyl)-anthranilate (PRA). This is Anthranilate phosphoribosyltransferase from Rhodopseudomonas palustris (strain BisB5).